Reading from the N-terminus, the 819-residue chain is Leucine--tRNA ligase (819 aa).

A 'HIGH' region motif is present at residues 42–53 (PYPSGAKLHIGH). Positions 578 to 582 (RMSKS) match the 'KMSKS' region motif. Residue K581 coordinates ATP.

The protein belongs to the class-I aminoacyl-tRNA synthetase family.

It localises to the cytoplasm. It catalyses the reaction tRNA(Leu) + L-leucine + ATP = L-leucyl-tRNA(Leu) + AMP + diphosphate. The polypeptide is Leucine--tRNA ligase (Caldanaerobacter subterraneus subsp. tengcongensis (strain DSM 15242 / JCM 11007 / NBRC 100824 / MB4) (Thermoanaerobacter tengcongensis)).